A 287-amino-acid polypeptide reads, in one-letter code: Methylamine utilization ferredoxin-type protein MauN (287 aa).

4Fe-4S ferredoxin-type domains lie at 218–248 (RVAA…PALK) and 251–280 (GSTL…MTMR). Residues cysteine 227, cysteine 230, cysteine 233, cysteine 237, cysteine 260, cysteine 263, cysteine 266, and cysteine 270 each coordinate [4Fe-4S] cluster.

It participates in one-carbon metabolism; methylamine degradation. Involved in electron transfer. This Methylorubrum extorquens (strain ATCC 14718 / DSM 1338 / JCM 2805 / NCIMB 9133 / AM1) (Methylobacterium extorquens) protein is Methylamine utilization ferredoxin-type protein MauN (mauN).